A 344-amino-acid polypeptide reads, in one-letter code: Dihydroorotase (344 aa).

His14 and His16 together coordinate Zn(2+). Substrate contacts are provided by residues 16 to 18 (HVR) and Asn42. Positions 99, 136, and 174 each coordinate Zn(2+). Lys99 bears the N6-carboxylysine mark. His136 is a binding site for substrate. Leu219 is a substrate binding site. Asp247 serves as a coordination point for Zn(2+). The active site involves Asp247. Substrate is bound by residues His251 and Ala263.

Belongs to the metallo-dependent hydrolases superfamily. DHOase family. Class II DHOase subfamily. In terms of assembly, homodimer. The cofactor is Zn(2+).

The enzyme catalyses (S)-dihydroorotate + H2O = N-carbamoyl-L-aspartate + H(+). The protein operates within pyrimidine metabolism; UMP biosynthesis via de novo pathway; (S)-dihydroorotate from bicarbonate: step 3/3. Catalyzes the reversible cyclization of carbamoyl aspartate to dihydroorotate. This is Dihydroorotase from Leptothrix cholodnii (strain ATCC 51168 / LMG 8142 / SP-6) (Leptothrix discophora (strain SP-6)).